The sequence spans 193 residues: D-alanyl-D-alanine dipeptidase (193 aa).

Residues His-98 and Asp-105 each contribute to the Zn(2+) site. The active-site Proton donor/acceptor is Glu-162. His-165 is a binding site for Zn(2+).

The protein belongs to the peptidase M15D family. It depends on Zn(2+) as a cofactor.

It is found in the cytoplasm. It catalyses the reaction D-alanyl-D-alanine + H2O = 2 D-alanine. In terms of biological role, catalyzes hydrolysis of the D-alanyl-D-alanine dipeptide. May have a role in cell-wall turnover. The protein is D-alanyl-D-alanine dipeptidase of Escherichia coli (strain K12).